Reading from the N-terminus, the 92-residue chain is Envelope glycoprotein J (92 aa).

The signal sequence occupies residues 1–21; the sequence is MSLRAVWHLGLLGSLVGAVLA. Topologically, residues 22 to 49 are extracellular; that stretch reads ATHRGPAANTTDPLTHAPVSPHPSPLGG. N30 carries an N-linked (GlcNAc...) asparagine; by host glycan. A helical transmembrane segment spans residues 50–70; the sequence is FAVPLVVGGLCAVVLGAACLL. At 71-92 the chain is on the cytoplasmic side; that stretch reads ELLRRTCRGWGRYHPYMDPVVV.

It belongs to the alphaherpesvirinae glycoprotein J family.

It localises to the host Golgi apparatus membrane. The protein resides in the host endoplasmic reticulum membrane. The protein localises to the host endosome membrane. Its function is as follows. Inhibits host cell apoptosis. Induces an increase in reactive oxygen species (ROS) in the host cell. The chain is Envelope glycoprotein J (gJ) from Homo sapiens (Human).